The chain runs to 736 residues: 1,4-alpha-glucan branching enzyme GlgB (736 aa).

Aspartate 415 functions as the Nucleophile in the catalytic mechanism. Glutamate 470 acts as the Proton donor in catalysis.

The protein belongs to the glycosyl hydrolase 13 family. GlgB subfamily. As to quaternary structure, monomer.

It carries out the reaction Transfers a segment of a (1-&gt;4)-alpha-D-glucan chain to a primary hydroxy group in a similar glucan chain.. The protein operates within glycan biosynthesis; glycogen biosynthesis. Its function is as follows. Catalyzes the formation of the alpha-1,6-glucosidic linkages in glycogen by scission of a 1,4-alpha-linked oligosaccharide from growing alpha-1,4-glucan chains and the subsequent attachment of the oligosaccharide to the alpha-1,6 position. This Burkholderia cenocepacia (strain HI2424) protein is 1,4-alpha-glucan branching enzyme GlgB.